Consider the following 138-residue polypeptide: UPF0201 protein PH1010 (138 aa).

It belongs to the UPF0201 family.

The protein is UPF0201 protein PH1010 of Pyrococcus horikoshii (strain ATCC 700860 / DSM 12428 / JCM 9974 / NBRC 100139 / OT-3).